Here is a 112-residue protein sequence, read N- to C-terminus: UPF0342 protein SGO_1370 (112 aa).

The protein belongs to the UPF0342 family.

This Streptococcus gordonii (strain Challis / ATCC 35105 / BCRC 15272 / CH1 / DL1 / V288) protein is UPF0342 protein SGO_1370.